We begin with the raw amino-acid sequence, 1141 residues long: DNA polymerase II large subunit (1141 aa).

Positions 567–587 (AGTRVGGRMGRPGKSAPRKMK) are disordered.

It belongs to the archaeal DNA polymerase II family. In terms of assembly, heterodimer of a large subunit and a small subunit.

The catalysed reaction is DNA(n) + a 2'-deoxyribonucleoside 5'-triphosphate = DNA(n+1) + diphosphate. It catalyses the reaction Exonucleolytic cleavage in the 3'- to 5'-direction to yield nucleoside 5'-phosphates.. In terms of biological role, possesses two activities: a DNA synthesis (polymerase) and an exonucleolytic activity that degrades single-stranded DNA in the 3'- to 5'-direction. Has a template-primer preference which is characteristic of a replicative DNA polymerase. This Methanocorpusculum labreanum (strain ATCC 43576 / DSM 4855 / Z) protein is DNA polymerase II large subunit.